A 216-amino-acid chain; its full sequence is UPF0502 protein PFL_4004 (216 aa).

This sequence belongs to the UPF0502 family.

This chain is UPF0502 protein PFL_4004, found in Pseudomonas fluorescens (strain ATCC BAA-477 / NRRL B-23932 / Pf-5).